A 139-amino-acid polypeptide reads, in one-letter code: Toxin FitB (139 aa).

The 122-residue stretch at 2–123 (ILLDTNVISE…HSLTVATRDT (122 aa)) folds into the PINc domain. The Mg(2+) site is built by Asp5 and Asp104.

The protein belongs to the PINc/VapC protein family. As to quaternary structure, forms a heterodimer with FitA, 4 FitAB heterodimers form a complex that binds to promoter DNA. The complex is also seen in solution. This protein does not actually contact DNA. It depends on Mg(2+) as a cofactor.

In terms of biological role, toxic component of a type II toxin-antitoxin (TA) system. Plays a role in the speed with which bacteria traverse human epithelial cells; disruption of the locus increases the speed of trafficking about 2-4-fold. FitAB binds to its own promoter better than FitA alone. The expected nuclease activity was not observed for the FitAB complex, perhaps because FitA (the antitoxin) prevents metal binding and thus catalysis by FitB. This Neisseria gonorrhoeae (strain ATCC 700825 / FA 1090) protein is Toxin FitB (fitB).